Here is a 372-residue protein sequence, read N- to C-terminus: Hydrogenase-1 small chain (372 aa).

Positions 1-45 (MNNEETFYQAMRRQGVTRRSFLKYCSLAATSLGLGAGMAPKIAWA) form a signal peptide, tat-type signal. Over 46 to 326 (LENKPRIPVV…QMGTHSTADT (281 aa)) the chain is Periplasmic. C62, C65, C160, C194, H232, C235, C260, and C266 together coordinate [4Fe-4S] cluster. Positions 275, 294, and 297 each coordinate [3Fe-4S] cluster. The chain crosses the membrane as a helical span at residues 327 to 347 (VGLTALGVVAAAVGVHAVASA). The interval 347 to 372 (AVDQRRRHNQQPTETEHQPGNEDKQA) is disordered. Residues 348-372 (VDQRRRHNQQPTETEHQPGNEDKQA) lie on the Cytoplasmic side of the membrane. Basic and acidic residues predominate over residues 360–372 (ETEHQPGNEDKQA).

This sequence belongs to the [NiFe]/[NiFeSe] hydrogenase small subunit family. As to quaternary structure, heterodimer of a large and a small subunit. It depends on [4Fe-4S] cluster as a cofactor. [3Fe-4S] cluster serves as cofactor. In terms of processing, predicted to be exported by the Tat system. The position of the signal peptide cleavage has not been experimentally proven.

It localises to the cell inner membrane. The catalysed reaction is H2 + A = AH2. Its function is as follows. This is one of three E.coli hydrogenases synthesized in response to different physiological conditions. HYD1 is believed to have a role in hydrogen cycling during fermentative growth. The sequence is that of Hydrogenase-1 small chain (hyaA) from Escherichia coli O6:H1 (strain CFT073 / ATCC 700928 / UPEC).